The primary structure comprises 732 residues: Elongation factor 2 (732 aa).

Residues 19 to 228 (ELIRNIGIVA…TKITFKDIVE (210 aa)) form the tr-type G domain. GTP is bound by residues 28-35 (AHIDHGKT), 94-98 (DTPGH), and 148-151 (NKID). H598 is subject to Diphthamide.

The protein belongs to the TRAFAC class translation factor GTPase superfamily. Classic translation factor GTPase family. EF-G/EF-2 subfamily.

It is found in the cytoplasm. Its function is as follows. Catalyzes the GTP-dependent ribosomal translocation step during translation elongation. During this step, the ribosome changes from the pre-translocational (PRE) to the post-translocational (POST) state as the newly formed A-site-bound peptidyl-tRNA and P-site-bound deacylated tRNA move to the P and E sites, respectively. Catalyzes the coordinated movement of the two tRNA molecules, the mRNA and conformational changes in the ribosome. The polypeptide is Elongation factor 2 (fusA) (Thermoplasma acidophilum (strain ATCC 25905 / DSM 1728 / JCM 9062 / NBRC 15155 / AMRC-C165)).